The sequence spans 140 residues: Nucleoside diphosphate kinase (140 aa).

Residues K11, F59, R87, T93, R104, and N114 each contribute to the ATP site. The Pros-phosphohistidine intermediate role is filled by H117.

This sequence belongs to the NDK family. In terms of assembly, homotetramer. It depends on Mg(2+) as a cofactor.

It localises to the cytoplasm. The catalysed reaction is a 2'-deoxyribonucleoside 5'-diphosphate + ATP = a 2'-deoxyribonucleoside 5'-triphosphate + ADP. It catalyses the reaction a ribonucleoside 5'-diphosphate + ATP = a ribonucleoside 5'-triphosphate + ADP. In terms of biological role, major role in the synthesis of nucleoside triphosphates other than ATP. The ATP gamma phosphate is transferred to the NDP beta phosphate via a ping-pong mechanism, using a phosphorylated active-site intermediate. This is Nucleoside diphosphate kinase from Rhizobium johnstonii (strain DSM 114642 / LMG 32736 / 3841) (Rhizobium leguminosarum bv. viciae).